A 285-amino-acid polypeptide reads, in one-letter code: Probable endonuclease 4 (285 aa).

Zn(2+) contacts are provided by His69, His109, Glu145, Asp179, His182, His216, Asp229, His231, and Glu261.

It belongs to the AP endonuclease 2 family. Zn(2+) is required as a cofactor.

It carries out the reaction Endonucleolytic cleavage to 5'-phosphooligonucleotide end-products.. Endonuclease IV plays a role in DNA repair. It cleaves phosphodiester bonds at apurinic or apyrimidinic (AP) sites, generating a 3'-hydroxyl group and a 5'-terminal sugar phosphate. This chain is Probable endonuclease 4, found in Yersinia pestis bv. Antiqua (strain Antiqua).